We begin with the raw amino-acid sequence, 236 residues long: MATRSRGVNRRSLRRWVRRGLVVAAVLALIPTMLTFLYLPSFVHPVSTLMLKDLATFSGYDRRWVSIDDVAPVLAHSVIMSEDGQFCFHRGVDLGELRGVVDDALAGEATRGASTITMQTVKNLFLWSRPLGSVRKVVELPLAVFFDAVMSKRRIMEIYLNIAEWGPGIYGIEAAAQHHFGIPAKQLSRRQAALLAVTLPNPIARNPAKPGPGLRRLANLIERRAGRSGAYVGCLE.

A helical membrane pass occupies residues 20–40 (GLVVAAVLALIPTMLTFLYLP).

It belongs to the glycosyltransferase 51 family.

The protein localises to the cell inner membrane. The catalysed reaction is [GlcNAc-(1-&gt;4)-Mur2Ac(oyl-L-Ala-gamma-D-Glu-L-Lys-D-Ala-D-Ala)](n)-di-trans,octa-cis-undecaprenyl diphosphate + beta-D-GlcNAc-(1-&gt;4)-Mur2Ac(oyl-L-Ala-gamma-D-Glu-L-Lys-D-Ala-D-Ala)-di-trans,octa-cis-undecaprenyl diphosphate = [GlcNAc-(1-&gt;4)-Mur2Ac(oyl-L-Ala-gamma-D-Glu-L-Lys-D-Ala-D-Ala)](n+1)-di-trans,octa-cis-undecaprenyl diphosphate + di-trans,octa-cis-undecaprenyl diphosphate + H(+). It functions in the pathway cell wall biogenesis; peptidoglycan biosynthesis. Its function is as follows. Peptidoglycan polymerase that catalyzes glycan chain elongation from lipid-linked precursors. This chain is Biosynthetic peptidoglycan transglycosylase, found in Mesorhizobium japonicum (strain LMG 29417 / CECT 9101 / MAFF 303099) (Mesorhizobium loti (strain MAFF 303099)).